Reading from the N-terminus, the 43-residue chain is Plasma membrane ATPase proteolipid 2 (43 aa).

Residues 1-5 (MLMST) constitute a propeptide that is removed on maturation. Residues 9 to 29 (GVILVFILVGLACIAIISTII) form a helical membrane-spanning segment. Over 30-43 (YRKWQARQRGLQRF) the chain is Cytoplasmic.

As to quaternary structure, monomer and homodimer. Associated with the 100 kDa subunit of the plasma membrane H(+)-ATPase.

It is found in the cell membrane. The sequence is that of Plasma membrane ATPase proteolipid 2 (PMP2) from Saccharomyces cerevisiae (strain ATCC 204508 / S288c) (Baker's yeast).